We begin with the raw amino-acid sequence, 610 residues long: Methionine--tRNA ligase (610 aa).

A 'HIGH' region motif is present at residues 12 to 22; the sequence is PYANGPRHIGH. Positions 144, 147, 157, and 160 each coordinate Zn(2+). The 'KMSKS' region motif lies at 348 to 352; it reads KFSSS. Residue Ser-351 coordinates ATP.

Belongs to the class-I aminoacyl-tRNA synthetase family. MetG type 1 subfamily. Monomer. Zn(2+) is required as a cofactor.

It localises to the cytoplasm. The catalysed reaction is tRNA(Met) + L-methionine + ATP = L-methionyl-tRNA(Met) + AMP + diphosphate. In terms of biological role, is required not only for elongation of protein synthesis but also for the initiation of all mRNA translation through initiator tRNA(fMet) aminoacylation. The polypeptide is Methionine--tRNA ligase (Corynebacterium glutamicum (strain R)).